We begin with the raw amino-acid sequence, 248 residues long: 4-hydroxy-tetrahydrodipicolinate reductase (248 aa).

NAD(+)-binding positions include 9–14, 77–79, and 104–107; these read GAKGRV, GTT, and APNF. Residue histidine 134 is the Proton donor/acceptor of the active site. Histidine 135 contributes to the (S)-2,3,4,5-tetrahydrodipicolinate binding site. Residue lysine 138 is the Proton donor of the active site. Residue 144 to 145 coordinates (S)-2,3,4,5-tetrahydrodipicolinate; the sequence is GT.

The protein belongs to the DapB family.

The protein resides in the cytoplasm. The catalysed reaction is (S)-2,3,4,5-tetrahydrodipicolinate + NAD(+) + H2O = (2S,4S)-4-hydroxy-2,3,4,5-tetrahydrodipicolinate + NADH + H(+). It carries out the reaction (S)-2,3,4,5-tetrahydrodipicolinate + NADP(+) + H2O = (2S,4S)-4-hydroxy-2,3,4,5-tetrahydrodipicolinate + NADPH + H(+). It functions in the pathway amino-acid biosynthesis; L-lysine biosynthesis via DAP pathway; (S)-tetrahydrodipicolinate from L-aspartate: step 4/4. Catalyzes the conversion of 4-hydroxy-tetrahydrodipicolinate (HTPA) to tetrahydrodipicolinate. This chain is 4-hydroxy-tetrahydrodipicolinate reductase, found in Corynebacterium glutamicum (strain ATCC 13032 / DSM 20300 / JCM 1318 / BCRC 11384 / CCUG 27702 / LMG 3730 / NBRC 12168 / NCIMB 10025 / NRRL B-2784 / 534).